Consider the following 624-residue polypeptide: LRR receptor kinase BAK1 (624 aa).

A signal peptide spans 1 to 25 (MAAHRWAVWAVLLLRLLVPAARVLA). Over 26-237 (NMEGDALHSL…QSPGSSSSTG (212 aa)) the chain is Extracellular. 4 LRR repeats span residues 91–115 (LKNL…LGNL), 117–139 (NLVS…LGNL), 140–163 (LKLR…LTAI), and 164–188 (TALQ…SFSL). Asn-103, Asn-114, Asn-127, Asn-149, and Asn-175 each carry an N-linked (GlcNAc...) asparagine glycan. Residues 205-236 (TTKPCPGAPPFSPPPPYNPPTPVQSPGSSSST) form a disordered region. The segment covering 210-227 (PGAPPFSPPPPYNPPTPV) has biased composition (pro residues). Residues 238–258 (AIAGGVAAGAALLFAIPAIGF) form a helical membrane-spanning segment. Over 259–624 (AWYRRRKPQE…LHAVELSGPR (366 aa)) the chain is Cytoplasmic. Residues 301–588 (FSNKNILGRG…GLAERWEEWQ (288 aa)) form the Protein kinase domain. ATP is bound by residues 307 to 315 (LGRGGFGKV) and Lys-329. Residue Asp-428 is the Proton acceptor of the active site.

It belongs to the protein kinase superfamily. Ser/Thr protein kinase family. Forms homodimers. Interacts with BRI1. Interacts with REM4.1. Expressed in developing lateral roots, shoot apex, leaf blades, lamina joints and flowers. Expressed at low levels in leaf sheaths and panicles.

It localises to the cell membrane. It carries out the reaction L-seryl-[protein] + ATP = O-phospho-L-seryl-[protein] + ADP + H(+). The enzyme catalyses L-threonyl-[protein] + ATP = O-phospho-L-threonyl-[protein] + ADP + H(+). In terms of biological role, LRR receptor kinase involved in defense response. Does not seem to be required specifically for XA21-mediated immunity or basal resistance to Xanthomonas oryzae pv. oryzae (Xoo), or immunity to Magnaporthe oryzae. Involved in brassinosteroid (BR) signaling pathway. Acts as a coreceptor of BRI1. Forms at the plasma membrane a receptor complex with BRI1 which is activated in response to brassinolide. Phosphorylates BRI1. Required for normal plant growth and leaf development. Possesses kinase activity in vitro. The sequence is that of LRR receptor kinase BAK1 from Oryza sativa subsp. japonica (Rice).